A 511-amino-acid polypeptide reads, in one-letter code: Glucans biosynthesis protein G (511 aa).

A signal peptide spans 1–22 (MMKMRWLSAAVMLTLYTSSSWA).

The protein belongs to the OpgD/OpgG family.

Its subcellular location is the periplasm. Its pathway is glycan metabolism; osmoregulated periplasmic glucan (OPG) biosynthesis. In terms of biological role, involved in the biosynthesis of osmoregulated periplasmic glucans (OPGs). The polypeptide is Glucans biosynthesis protein G (Escherichia coli O8 (strain IAI1)).